Here is a 276-residue protein sequence, read N- to C-terminus: MSLTTLPGVCGIGLRAPHYREALDARPELGWVEVHSENFFDGGTPLAMLRRVAECWPLSLHGVGLGLGSAARPDRGHLASLRRLVDETCPAAVSEHLSFNHSPHRYVNDLLPIPYTRAALDTVAGHVSETQDALGRTILLENLSSYVEFPDNEMNEGEFLAELVRITGCGVLLDVNNLYVNRINLGTDTDAVLAALPPDAIGEIHLAGYSEREGMLVDTHSQAVHDEVWRFYREVIRRIGPRPTLIEWDLDIPPLATLQAEAAKAQAILGGADERS.

It belongs to the UPF0276 family.

The polypeptide is UPF0276 protein CV_3513 (Chromobacterium violaceum (strain ATCC 12472 / DSM 30191 / JCM 1249 / CCUG 213 / NBRC 12614 / NCIMB 9131 / NCTC 9757 / MK)).